The primary structure comprises 130 residues: Small ribosomal subunit protein uS9 (130 aa).

It belongs to the universal ribosomal protein uS9 family.

This Streptococcus uberis (strain ATCC BAA-854 / 0140J) protein is Small ribosomal subunit protein uS9.